A 319-amino-acid polypeptide reads, in one-letter code: Probable NAD(P)H-dependent D-xylose reductase xyl1 (319 aa).

Tyrosine 50 functions as the Proton donor in the catalytic mechanism. Histidine 112 serves as a coordination point for substrate. Residues serine 166–asparagine 167, serine 215–glutamate 224, and lysine 271–asparagine 281 contribute to the NAD(+) site.

This sequence belongs to the aldo/keto reductase family.

The enzyme catalyses xylitol + NAD(+) = D-xylose + NADH + H(+). It carries out the reaction xylitol + NADP(+) = D-xylose + NADPH + H(+). Its pathway is carbohydrate metabolism; D-xylose degradation. Catalyzes the initial reaction in the xylose utilization pathway by reducing D-xylose into xylitol. Xylose is a major component of hemicelluloses such as xylan. Most fungi utilize D-xylose via three enzymatic reactions, xylose reductase (XR), xylitol dehydrogenase (XDH), and xylulokinase, to form xylulose 5-phosphate, which enters pentose phosphate pathway. In Aspergillus oryzae (strain ATCC 42149 / RIB 40) (Yellow koji mold), this protein is Probable NAD(P)H-dependent D-xylose reductase xyl1 (xyl1).